The primary structure comprises 918 residues: Translation initiation factor IF-2 (918 aa).

The interval 39-321 (DDASEKHLRN…KRDGRMKETT (283 aa)) is disordered. The segment covering 95-146 (KSSNNESTTRNNNNNKNGNQNRNNTNGRPNNNQNRPNNNRNQNNNRNGNRPN) has biased composition (low complexity). Residues 148–158 (PKRDEKQDRIR) show a composition bias toward basic and acidic residues. Residues 159-174 (ASVAEAARMAAQANRE) show a composition bias toward low complexity. Over residues 180 to 190 (PQANRQRTNSA) the composition is skewed to polar residues. Low complexity-rich tracts occupy residues 201-231 (NNQN…NNRN), 237-267 (SRPN…TANN), and 278-296 (GRNN…QNRP). Over residues 302–313 (RKNKKRNRKAKR) the composition is skewed to basic residues. Residues 419 to 588 (SRPPVVTIMG…LLQAEVLELK (170 aa)) enclose the tr-type G domain. The tract at residues 428–435 (GHVDHGKT) is G1. Position 428 to 435 (428 to 435 (GHVDHGKT)) interacts with GTP. Positions 453-457 (GITQG) are G2. A G3 region spans residues 474–477 (DTPG). GTP is bound by residues 474 to 478 (DTPGH) and 528 to 531 (NKID). The interval 528-531 (NKID) is G4. Residues 564–566 (SAK) are G5.

This sequence belongs to the TRAFAC class translation factor GTPase superfamily. Classic translation factor GTPase family. IF-2 subfamily.

Its subcellular location is the cytoplasm. Its function is as follows. One of the essential components for the initiation of protein synthesis. Protects formylmethionyl-tRNA from spontaneous hydrolysis and promotes its binding to the 30S ribosomal subunits. Also involved in the hydrolysis of GTP during the formation of the 70S ribosomal complex. This chain is Translation initiation factor IF-2, found in Pediococcus pentosaceus (strain ATCC 25745 / CCUG 21536 / LMG 10740 / 183-1w).